The chain runs to 347 residues: tRNA N6-adenosine threonylcarbamoyltransferase (347 aa).

Residues histidine 113 and histidine 117 each contribute to the Fe cation site. Residues 136–140 (IVSGG), aspartate 170, glycine 183, aspartate 187, and asparagine 282 each bind substrate. Fe cation is bound at residue aspartate 310.

Belongs to the KAE1 / TsaD family. Requires Fe(2+) as cofactor.

The protein resides in the cytoplasm. It carries out the reaction L-threonylcarbamoyladenylate + adenosine(37) in tRNA = N(6)-L-threonylcarbamoyladenosine(37) in tRNA + AMP + H(+). Its function is as follows. Required for the formation of a threonylcarbamoyl group on adenosine at position 37 (t(6)A37) in tRNAs that read codons beginning with adenine. Is involved in the transfer of the threonylcarbamoyl moiety of threonylcarbamoyl-AMP (TC-AMP) to the N6 group of A37, together with TsaE and TsaB. TsaD likely plays a direct catalytic role in this reaction. This chain is tRNA N6-adenosine threonylcarbamoyltransferase, found in Bifidobacterium longum (strain NCC 2705).